The chain runs to 989 residues: DNA-directed RNA polymerase subunit beta' (989 aa).

D383, D385, and D387 together coordinate Mg(2+).

Belongs to the RNA polymerase beta' chain family. In terms of assembly, the RNAP catalytic core consists of 2 alpha, 1 beta, 1 beta' and 1 omega subunit. When a sigma factor is associated with the core the holoenzyme is formed, which can initiate transcription. Mg(2+) is required as a cofactor.

The enzyme catalyses RNA(n) + a ribonucleoside 5'-triphosphate = RNA(n+1) + diphosphate. DNA-dependent RNA polymerase catalyzes the transcription of DNA into RNA using the four ribonucleoside triphosphates as substrates. This is DNA-directed RNA polymerase subunit beta' (rpoC) from Leuconostoc pseudomesenteroides.